Consider the following 64-residue polypeptide: MPKMKTHRGAAKRFKKTKNKIKRGSAFRSHILTKKSPKTKRHLRAPHYVSKVDEPRVIELISTY.

A disordered region spans residues 1–23; that stretch reads MPKMKTHRGAAKRFKKTKNKIKR.

Belongs to the bacterial ribosomal protein bL35 family.

This is Large ribosomal subunit protein bL35 from Nitratiruptor sp. (strain SB155-2).